The following is a 131-amino-acid chain: Ribosome-binding factor A (131 aa).

It belongs to the RbfA family. As to quaternary structure, monomer. Binds 30S ribosomal subunits, but not 50S ribosomal subunits or 70S ribosomes.

It localises to the cytoplasm. One of several proteins that assist in the late maturation steps of the functional core of the 30S ribosomal subunit. Associates with free 30S ribosomal subunits (but not with 30S subunits that are part of 70S ribosomes or polysomes). Required for efficient processing of 16S rRNA. May interact with the 5'-terminal helix region of 16S rRNA. The protein is Ribosome-binding factor A of Thermotoga sp. (strain RQ2).